The sequence spans 333 residues: Zinc-type alcohol dehydrogenase-like protein SACOL2177 (333 aa).

The protein belongs to the zinc-containing alcohol dehydrogenase family. Quinone oxidoreductase subfamily.

The sequence is that of Zinc-type alcohol dehydrogenase-like protein SACOL2177 from Staphylococcus aureus (strain COL).